Reading from the N-terminus, the 152-residue chain is Ribosome maturation factor RimP (152 aa).

It belongs to the RimP family.

It is found in the cytoplasm. In terms of biological role, required for maturation of 30S ribosomal subunits. The sequence is that of Ribosome maturation factor RimP from Brevibacillus brevis (strain 47 / JCM 6285 / NBRC 100599).